The sequence spans 144 residues: Universal stress protein A homolog 1 (144 aa).

This sequence belongs to the universal stress protein A family. As to quaternary structure, homodimer.

The protein resides in the cytoplasm. Functionally, involved in stress response. This chain is Universal stress protein A homolog 1 (uspA1), found in Coxiella burnetii (strain RSA 493 / Nine Mile phase I).